The following is a 155-amino-acid chain: Transcriptional repressor NrdR (155 aa).

Residues 3–34 (CPFCNQTDTKVIDSRLVADGVQVRRRRECQAC) fold into a zinc finger. The 91-residue stretch at 49 to 139 (PKVIKQDGTR…VYRSFQDISE (91 aa)) folds into the ATP-cone domain.

It belongs to the NrdR family. Requires Zn(2+) as cofactor.

Functionally, negatively regulates transcription of bacterial ribonucleotide reductase nrd genes and operons by binding to NrdR-boxes. This is Transcriptional repressor NrdR from Teredinibacter turnerae (strain ATCC 39867 / T7901).